A 304-amino-acid polypeptide reads, in one-letter code: Tyrosine recombinase XerC (304 aa).

Positions 2–88 constitute a Core-binding (CB) domain; the sequence is ENVKNFVKLF…ALRSFYKFLM (87 aa). Positions 109 to 294 constitute a Tyr recombinase domain; sequence RIPKFLYQKE…SKEMLRNTYM (186 aa). Active-site residues include R149, K173, H246, R249, and H272. Residue Y281 is the O-(3'-phospho-DNA)-tyrosine intermediate of the active site.

This sequence belongs to the 'phage' integrase family. XerC subfamily. As to quaternary structure, forms a cyclic heterotetrameric complex composed of two molecules of XerC and two molecules of XerD.

Its subcellular location is the cytoplasm. Functionally, site-specific tyrosine recombinase, which acts by catalyzing the cutting and rejoining of the recombining DNA molecules. The XerC-XerD complex is essential to convert dimers of the bacterial chromosome into monomers to permit their segregation at cell division. It also contributes to the segregational stability of plasmids. This chain is Tyrosine recombinase XerC, found in Bacillus subtilis (strain 168).